The chain runs to 283 residues: Elongation factor Ts (283 aa).

The segment at 80–83 (TDFV) is involved in Mg(2+) ion dislocation from EF-Tu.

This sequence belongs to the EF-Ts family.

The protein localises to the cytoplasm. Functionally, associates with the EF-Tu.GDP complex and induces the exchange of GDP to GTP. It remains bound to the aminoacyl-tRNA.EF-Tu.GTP complex up to the GTP hydrolysis stage on the ribosome. The sequence is that of Elongation factor Ts from Salmonella choleraesuis (strain SC-B67).